Reading from the N-terminus, the 316-residue chain is Pantothenate kinase (316 aa).

95–102 provides a ligand contact to ATP; it reads GSVAVGKS.

This sequence belongs to the prokaryotic pantothenate kinase family.

It localises to the cytoplasm. The enzyme catalyses (R)-pantothenate + ATP = (R)-4'-phosphopantothenate + ADP + H(+). Its pathway is cofactor biosynthesis; coenzyme A biosynthesis; CoA from (R)-pantothenate: step 1/5. The chain is Pantothenate kinase from Pectobacterium carotovorum subsp. carotovorum (strain PC1).